Here is a 430-residue protein sequence, read N- to C-terminus: Serine--tRNA ligase (430 aa).

The tract at residues 47-66 is disordered; the sequence is AQAEQNKASKEAGAAKGRGD. 231–233 lines the L-serine pocket; it reads TSE. 262 to 264 is an ATP binding site; the sequence is RSE. Glutamate 285 lines the L-serine pocket. 349–352 is an ATP binding site; it reads EISS. Serine 385 lines the L-serine pocket.

The protein belongs to the class-II aminoacyl-tRNA synthetase family. Type-1 seryl-tRNA synthetase subfamily. Homodimer. The tRNA molecule binds across the dimer.

The protein localises to the cytoplasm. The catalysed reaction is tRNA(Ser) + L-serine + ATP = L-seryl-tRNA(Ser) + AMP + diphosphate + H(+). The enzyme catalyses tRNA(Sec) + L-serine + ATP = L-seryl-tRNA(Sec) + AMP + diphosphate + H(+). It participates in aminoacyl-tRNA biosynthesis; selenocysteinyl-tRNA(Sec) biosynthesis; L-seryl-tRNA(Sec) from L-serine and tRNA(Sec): step 1/1. Functionally, catalyzes the attachment of serine to tRNA(Ser). Is also able to aminoacylate tRNA(Sec) with serine, to form the misacylated tRNA L-seryl-tRNA(Sec), which will be further converted into selenocysteinyl-tRNA(Sec). This Paracoccus denitrificans (strain Pd 1222) protein is Serine--tRNA ligase.